Here is a 199-residue protein sequence, read N- to C-terminus: Hematopoietic prostaglandin D synthase (199 aa).

A GST N-terminal domain is found at 2–79 (PNYKLTYFNL…YLARESGLAG (78 aa)). Glutathione is bound by residues Tyr8, Arg14, Trp39, 49–51 (GKV), and 63–64 (QS). In terms of domain architecture, GST C-terminal spans 81–199 (TPVEQALADA…WIQKRPKTAI (119 aa)).

The protein belongs to the GST superfamily. Sigma family. The cofactor is glutathione. Highly expressed in liver, kidney, small intestine and colon, moderately in pancreas, bone marrow, lung and ovary, and expressed at low levels in spleen, thymus, heart and brain. Not detected in oviduct or skin (at protein level). Expressed in liver.

It localises to the cytoplasm. The enzyme catalyses prostaglandin H2 = prostaglandin D2. It catalyses the reaction RX + glutathione = an S-substituted glutathione + a halide anion + H(+). The catalysed reaction is 2-glyceryl-prostaglandin H2 = 2-glyceryl-prostaglandin D2. Functionally, bifunctional enzyme which catalyzes both the conversion of PGH2 to PGD2, a prostaglandin involved in smooth muscle contraction/relaxation and a potent inhibitor of platelet aggregation, and the conjugation of glutathione with a wide range of aryl halides, organic isothiocyanates and alpha,beta-unsaturated carbonyls. Also exhibits low glutathione-peroxidase activity towards cumene hydroperoxide and t-butyl hydroperoxide. This chain is Hematopoietic prostaglandin D synthase (HPGDS), found in Gallus gallus (Chicken).